Reading from the N-terminus, the 762-residue chain is Catalase-peroxidase (762 aa).

The disordered stretch occupies residues methionine 1–threonine 22. Residues tryptophan 96–tyrosine 242 constitute a cross-link (tryptophyl-tyrosyl-methioninium (Trp-Tyr) (with M-268)). Residue histidine 97 is the Proton acceptor of the active site. A cross-link (tryptophyl-tyrosyl-methioninium (Tyr-Met) (with W-96)) is located at residues tyrosine 242–methionine 268. A heme b-binding site is contributed by histidine 283.

The protein belongs to the peroxidase family. Peroxidase/catalase subfamily. As to quaternary structure, homodimer or homotetramer. Requires heme b as cofactor. Post-translationally, formation of the three residue Trp-Tyr-Met cross-link is important for the catalase, but not the peroxidase activity of the enzyme.

The protein resides in the cytoplasm. It carries out the reaction H2O2 + AH2 = A + 2 H2O. The enzyme catalyses 2 H2O2 = O2 + 2 H2O. In terms of biological role, bifunctional enzyme with both catalase and broad-spectrum peroxidase activity. The polypeptide is Catalase-peroxidase (Aspergillus niger (strain ATCC MYA-4892 / CBS 513.88 / FGSC A1513)).